Consider the following 160-residue polypeptide: Nucleotide-binding protein CJA_2652 (160 aa).

This sequence belongs to the YajQ family.

Its function is as follows. Nucleotide-binding protein. This chain is Nucleotide-binding protein CJA_2652, found in Cellvibrio japonicus (strain Ueda107) (Pseudomonas fluorescens subsp. cellulosa).